Reading from the N-terminus, the 252-residue chain is U2 small nuclear ribonucleoprotein A' (252 aa).

LRR repeat units lie at residues 41–62, 63–84, and 87–108; these read PHDAIDFTDNDIQVLGNFPLSP, RIRTLLLARNRIAQIQSTLPNA, and NLKNLVLASNNIGELADLEVLG. Positions 121-159 constitute an LRRCT domain; that stretch reads NPVTKKENYRYWVLWLCPQVRFLDYVKVKDAERQKAKEL.

It belongs to the U2 small nuclear ribonucleoprotein A family. In terms of assembly, associated with the spliceosome.

It is found in the nucleus. Functionally, involved in pre-mRNA splicing. This is U2 small nuclear ribonucleoprotein A' (lea-1) from Neurospora crassa (strain ATCC 24698 / 74-OR23-1A / CBS 708.71 / DSM 1257 / FGSC 987).